The primary structure comprises 255 residues: Phosphate import ATP-binding protein PstB (255 aa).

In terms of domain architecture, ABC transporter spans 9 to 250 (IAVQNLNFYY…PKIQRTEDYI (242 aa)). An ATP-binding site is contributed by 41-48 (GPSGCGKS).

The protein belongs to the ABC transporter superfamily. Phosphate importer (TC 3.A.1.7) family. As to quaternary structure, the complex is composed of two ATP-binding proteins (PstB), two transmembrane proteins (PstC and PstA) and a solute-binding protein (PstS).

The protein localises to the cell inner membrane. It catalyses the reaction phosphate(out) + ATP + H2O = ADP + 2 phosphate(in) + H(+). In terms of biological role, part of the ABC transporter complex PstSACB involved in phosphate import. Responsible for energy coupling to the transport system. The chain is Phosphate import ATP-binding protein PstB from Haemophilus influenzae (strain 86-028NP).